Consider the following 110-residue polypeptide: Small EDRK-rich factor 1 (110 aa).

Residues Met1 to Ser30 are compositionally biased toward basic and acidic residues. The segment at Met1–Arg61 is disordered. A required for SNCA binding region spans residues Arg11 to Lys17. The span at Ser34 to Ser50 shows a compositional bias: low complexity.

It belongs to the SERF family. As to quaternary structure, interacts with SNCA; this interaction promotes the aggregation of SNCA. In terms of tissue distribution, isoform Long is predominantly expressed in heart, brain and skeletal muscle. Isoform Short and Isoform Long are expressed throughout the central nervous system, including spinal cord.

Its subcellular location is the cytoplasm. The protein resides in the cytosol. It localises to the nucleus. In terms of biological role, positive regulator of amyloid protein aggregation and proteotoxicity. Induces conformational changes in amyloid proteins, such as APP, HTT, and SNCA, driving them into compact formations preceding the formation of aggregates. This Homo sapiens (Human) protein is Small EDRK-rich factor 1 (SERF1A).